The primary structure comprises 1119 residues: DNA-directed RNA polymerase subunit beta (1119 aa).

The protein belongs to the RNA polymerase beta chain family. As to quaternary structure, the RNAP catalytic core consists of 2 alpha, 1 beta, 1 beta' and 1 omega subunit. When a sigma factor is associated with the core the holoenzyme is formed, which can initiate transcription.

The catalysed reaction is RNA(n) + a ribonucleoside 5'-triphosphate = RNA(n+1) + diphosphate. In terms of biological role, DNA-dependent RNA polymerase catalyzes the transcription of DNA into RNA using the four ribonucleoside triphosphates as substrates. The polypeptide is DNA-directed RNA polymerase subunit beta (Thermus thermophilus (strain ATCC BAA-163 / DSM 7039 / HB27)).